Reading from the N-terminus, the 858-residue chain is Neurofilament medium polypeptide (858 aa).

Position 2 is an N-acetylserine (serine 2). The tract at residues 2 to 99 (SYTMEPLGNP…KLSRSNEKEQ (98 aa)) is head. Residues 22 to 57 (ATYSRASASPSSGFRSQSWSRGSGSTVSSSYKRTNL) form a disordered region. A compositionally biased stretch (low complexity) spans 30–54 (SPSSGFRSQSWSRGSGSTVSSSYKR). Threonine 47 is a glycosylation site (O-linked (GlcNAc) threonine). The 312-residue stretch at 96–407 (EKEQLQGLND…KLLEGEETRF (312 aa)) folds into the IF rod domain. The coil 1A stretch occupies residues 100 to 131 (LQGLNDRFAGYIEKVHYLEQQNKEIEAELAAL). A linker 1 region spans residues 132–144 (RQKHAGRAQLGDA). Residues 145 to 243 (YEQELRELRG…EEEVAELLAQ (99 aa)) form a coil 1B region. Residues 244-260 (LQASHATVERKDYLKTD) are linker 12. Residues 261-282 (LTTALKEIRAQLECQSDHNMHQ) form a coil 2A region. The linker 2 stretch occupies residues 283-286 (AEEW). A coil 2B region spans residues 287 to 407 (FKCRYAKLTE…KLLEGEETRF (121 aa)). Positions 408-858 (SAFSGSITGP…SHAVVKEIKE (451 aa)) are tail. O-linked (GlcNAc) threonine glycosylation is present at threonine 427. Positions 478 to 788 (AAKAQEEEQE…VVTNGLDVSP (311 aa)) are disordered. Acidic residues-rich tracts occupy residues 484–500 (EEQE…EEEA) and 509–524 (AAEE…EEEE). Over residues 525–541 (AAKSDAAEEGGSKKEEI) the composition is skewed to basic and acidic residues. Over residues 542–555 (EEKEEGEEAEEEEA) the composition is skewed to acidic residues. Residues 556-572 (EAKGKAEEAGAKVEKVK) are compositionally biased toward basic and acidic residues. Over residues 576-586 (AKSPPKSPPKS) the composition is skewed to pro residues. Positions 590-601 (EQAKAVQKAAAE) are enriched in low complexity. The span at 602-623 (VGKDQKAEKAAEKAAKEEKAAS) shows a compositional bias: basic and acidic residues. The span at 624–637 (PEKPATPKVTSPEK) shows a compositional bias: low complexity. 2 stretches are compositionally biased toward basic and acidic residues: residues 651-664 (ITPE…KPTT) and 675-727 (ASPE…KAVV). The segment covering 728–743 (EESITVTKVTKVTAEV) has biased composition (low complexity). The span at 744–771 (EVSKEARKEDIAVNGEVEEKKDEAKEKE) shows a compositional bias: basic and acidic residues.

The protein belongs to the intermediate filament family. There are a number of repeats of the tripeptide K-S-P, NFM is phosphorylated on a number of the serines in this motif. It is thought that phosphorylation of NFM results in the formation of interfilament cross bridges that are important in the maintenance of axonal caliber. In terms of processing, phosphorylation seems to play a major role in the functioning of the larger neurofilament polypeptides (NF-M and NF-H), the levels of phosphorylation being altered developmentally and coincident with a change in the neurofilament function.

It localises to the cytoplasm. It is found in the cytoskeleton. The protein resides in the cell projection. Its subcellular location is the axon. Neurofilaments usually contain three intermediate filament proteins: NEFL, NEFM, and NEFH which are involved in the maintenance of neuronal caliber. May additionally cooperate with other neuronal intermediate filament proteins to form neuronal filamentous networks. The sequence is that of Neurofilament medium polypeptide (NEFM) from Gallus gallus (Chicken).